Reading from the N-terminus, the 382-residue chain is tRNA(Ile)-lysidine synthase (382 aa).

Position 50–55 (50–55 (SGGRDS)) interacts with ATP.

The protein belongs to the tRNA(Ile)-lysidine synthase family.

It is found in the cytoplasm. The enzyme catalyses cytidine(34) in tRNA(Ile2) + L-lysine + ATP = lysidine(34) in tRNA(Ile2) + AMP + diphosphate + H(+). Ligates lysine onto the cytidine present at position 34 of the AUA codon-specific tRNA(Ile) that contains the anticodon CAU, in an ATP-dependent manner. Cytidine is converted to lysidine, thus changing the amino acid specificity of the tRNA from methionine to isoleucine. This Bifidobacterium animalis subsp. lactis (strain AD011) protein is tRNA(Ile)-lysidine synthase.